Here is a 326-residue protein sequence, read N- to C-terminus: 4-hydroxythreonine-4-phosphate dehydrogenase (326 aa).

Residues His-132 and Thr-133 each coordinate substrate. Residues His-163, His-208, and His-263 each contribute to the a divalent metal cation site. Positions 271, 280, and 289 each coordinate substrate.

Belongs to the PdxA family. As to quaternary structure, homodimer. The cofactor is Zn(2+). Mg(2+) serves as cofactor. Requires Co(2+) as cofactor.

The protein localises to the cytoplasm. The catalysed reaction is 4-(phosphooxy)-L-threonine + NAD(+) = 3-amino-2-oxopropyl phosphate + CO2 + NADH. It participates in cofactor biosynthesis; pyridoxine 5'-phosphate biosynthesis; pyridoxine 5'-phosphate from D-erythrose 4-phosphate: step 4/5. Catalyzes the NAD(P)-dependent oxidation of 4-(phosphooxy)-L-threonine (HTP) into 2-amino-3-oxo-4-(phosphooxy)butyric acid which spontaneously decarboxylates to form 3-amino-2-oxopropyl phosphate (AHAP). The sequence is that of 4-hydroxythreonine-4-phosphate dehydrogenase from Roseobacter denitrificans (strain ATCC 33942 / OCh 114) (Erythrobacter sp. (strain OCh 114)).